Reading from the N-terminus, the 115-residue chain is Large ribosomal subunit protein P2 (115 aa).

Met1 is subject to N-acetylmethionine. Phosphoserine is present on residues Ser17 and Ser19. Lys21 bears the N6-acetyllysine; alternate mark. The residue at position 21 (Lys21) is an N6-succinyllysine; alternate. Over residues Ala76–Ala90 the composition is skewed to low complexity. The interval Ala76–Asp115 is disordered. Ser79 and Ser86 each carry phosphoserine. The span at Ala91 to Glu101 shows a compositional bias: basic and acidic residues. Ser102 and Ser105 each carry phosphoserine.

The protein belongs to the eukaryotic ribosomal protein P1/P2 family. As to quaternary structure, heterodimer with RPLP1 at the lateral ribosomal stalk of the large ribosomal subunit.

Its function is as follows. Plays an important role in the elongation step of protein synthesis. This Bos taurus (Bovine) protein is Large ribosomal subunit protein P2 (RPLP2).